Reading from the N-terminus, the 657-residue chain is Glycogen debranching enzyme (657 aa).

The active-site Nucleophile is the Asp336. The Proton donor role is filled by Glu371. The tract at residues Ala460–Lys479 is disordered.

Belongs to the glycosyl hydrolase 13 family.

It catalyses the reaction Hydrolysis of (1-&gt;6)-alpha-D-glucosidic linkages to branches with degrees of polymerization of three or four glucose residues in limit dextrin.. The protein operates within glycan degradation; glycogen degradation. Functionally, removes maltotriose and maltotetraose chains that are attached by 1,6-alpha-linkage to the limit dextrin main chain, generating a debranched limit dextrin. This Escherichia coli O1:K1 / APEC protein is Glycogen debranching enzyme.